Consider the following 680-residue polypeptide: tRNA 5-methylaminomethyl-2-thiouridine biosynthesis bifunctional protein MnmC (680 aa).

The tRNA (mnm(5)s(2)U34)-methyltransferase stretch occupies residues 1 to 251 (MSQNHILPQN…KREMIAGTLT (251 aa)). The segment at 277 to 680 (IGGGVASAAL…RLLKGKPLDI (404 aa)) is FAD-dependent cmnm(5)s(2)U34 oxidoreductase.

In the N-terminal section; belongs to the methyltransferase superfamily. tRNA (mnm(5)s(2)U34)-methyltransferase family. The protein in the C-terminal section; belongs to the DAO family. The cofactor is FAD.

The protein localises to the cytoplasm. The catalysed reaction is 5-aminomethyl-2-thiouridine(34) in tRNA + S-adenosyl-L-methionine = 5-methylaminomethyl-2-thiouridine(34) in tRNA + S-adenosyl-L-homocysteine + H(+). Functionally, catalyzes the last two steps in the biosynthesis of 5-methylaminomethyl-2-thiouridine (mnm(5)s(2)U) at the wobble position (U34) in tRNA. Catalyzes the FAD-dependent demodification of cmnm(5)s(2)U34 to nm(5)s(2)U34, followed by the transfer of a methyl group from S-adenosyl-L-methionine to nm(5)s(2)U34, to form mnm(5)s(2)U34. The chain is tRNA 5-methylaminomethyl-2-thiouridine biosynthesis bifunctional protein MnmC from Aliivibrio fischeri (strain ATCC 700601 / ES114) (Vibrio fischeri).